Consider the following 752-residue polypeptide: Double zinc ribbon and ankyrin repeat-containing protein 1 (752 aa).

Residues Ser160 and Ser182 each carry the phosphoserine modification. The segment at 164-187 is disordered; it reads IPAYGGGSGSRPPTRQSQSPGFAH. Polar residues predominate over residues 174-183; the sequence is RPPTRQSQSP. 2 DZANK-type zinc fingers span residues 211-270 and 339-387; these read CAHC…CVVC and CYRC…GSCG. ANK repeat units follow at residues 605-636 and 640-669; these read ENRLLLKEVGPTGEGRVSVIEQLLDEGADPNC and DNRPVITVAVMNKHHEAIPVLVQRGADIDQ.

As to quaternary structure, interacts with NINL isoform 2. Associates with DYNC1H1 and multiple dynein intermediate and light chains as well as actin-binding proteins.

The protein resides in the cytoplasm. The protein localises to the cytoskeleton. Its subcellular location is the microtubule organizing center. It is found in the centrosome. It localises to the cilium basal body. Functionally, involved in vesicle transport in photoreceptor cells. The chain is Double zinc ribbon and ankyrin repeat-containing protein 1 from Homo sapiens (Human).